The sequence spans 213 residues: MFITFEGMDGSGKTTALLKVKEELERLNYKVLITREPGGEVIAEQIRQIILDNKNKDMDAWTEALLFIASRNQHLQKVIKPALEKNIIVISDRFIDSTSAYQGSARNIGVDVVSEVQQIVLKNCLPDLTLFFDVSFSEAEKRMQIRGESSKNRLDKEENNFKQKVYQGYLELVKNNPKRIKVIDANKDIDQVYNQAIKIILEKLKENEKRTSN.

Gly7–Thr14 contributes to the ATP binding site.

The protein belongs to the thymidylate kinase family.

The enzyme catalyses dTMP + ATP = dTDP + ADP. In terms of biological role, phosphorylation of dTMP to form dTDP in both de novo and salvage pathways of dTTP synthesis. The protein is Thymidylate kinase of Mycoplasma capricolum subsp. capricolum (strain California kid / ATCC 27343 / NCTC 10154).